Here is a 78-residue protein sequence, read N- to C-terminus: Large ribosomal subunit protein eL20 (78 aa).

This sequence belongs to the eukaryotic ribosomal protein eL20 family. Part of the 50S ribosomal subunit. Binds 23S rRNA.

The sequence is that of Large ribosomal subunit protein eL20 from Pyrobaculum neutrophilum (strain DSM 2338 / JCM 9278 / NBRC 100436 / V24Sta) (Thermoproteus neutrophilus).